Consider the following 341-residue polypeptide: General L-amino acid-binding periplasmic protein AapJ (341 aa).

A signal peptide spans 1–23; that stretch reads MKNKLLSAAIGAAVLAVGASAAS.

The protein belongs to the bacterial solute-binding protein 3 family. As to quaternary structure, the complex is composed of two ATP-binding proteins (AapP), two transmembrane proteins (AapM and AapQ) and a solute-binding protein (AapJ).

It localises to the periplasm. In terms of biological role, part of the ABC transporter complex AapJQMP involved in uptake of L-amino acids. Affects the efflux of these amino acids as well. Essential for the development of bacteroids, the differentiated legume-symbiotic forms of this bacterium, and for the effective N(2) fixation by them. This is General L-amino acid-binding periplasmic protein AapJ (aapJ) from Rhizobium johnstonii (strain DSM 114642 / LMG 32736 / 3841) (Rhizobium leguminosarum bv. viciae).